The following is a 205-amino-acid chain: Iron-sulfur assembly protein 2 (205 aa).

Cysteine 131, cysteine 196, and cysteine 198 together coordinate Fe cation.

It belongs to the HesB/IscA family.

Its subcellular location is the mitochondrion matrix. Functionally, involved in the assembly of mitochondrial and cytoplasmic iron-sulfur proteins. Probably involved in the binding of an intermediate of Fe/S cluster assembly. This is Iron-sulfur assembly protein 2 (isa2) from Schizosaccharomyces pombe (strain 972 / ATCC 24843) (Fission yeast).